A 294-amino-acid chain; its full sequence is MDHHQYHHHDQYQHQMMTSTNNNSYNTIVTTQPPPTTTTMDSTTATTMIMDDEKKLMTTMSTRPQEPRNCPRCNSSNTKFCYYNNYSLAQPRYLCKSCRRYWTEGGSLRNVPVGGGSRKNKKLPFPNSSTSSSTKNLPDLNPPFVFTSSASSSNPSKTHQNNNDLSLSFSSPMQDKRAQGHYGHFSEQVVTGGQNCLFQAPMGMIQFRQEYDHEHPKKNLGFSLDRNEEEIGNHDNFVVNEEGSKMMYPYGDHEDRQQHHHVRHDDGNKKREGGSSNELWSGIILGGDSGGPTW.

The Dof-type zinc-finger motif lies at 68 to 122 (RNCPRCNSSNTKFCYYNNYSLAQPRYLCKSCRRYWTEGGSLRNVPVGGGSRKNKK). Residues Cys-70, Cys-73, Cys-95, and Cys-98 each contribute to the Zn(2+) site. 2 disordered regions span residues 109–178 (RNVP…DKRA) and 247–294 (MYPY…GPTW). 2 stretches are compositionally biased toward polar residues: residues 126–136 (PNSSTSSSTKN) and 157–173 (KTHQNNNDLSLSFSSPM). A compositionally biased stretch (basic and acidic residues) spans 251-273 (GDHEDRQQHHHVRHDDGNKKREG). A compositionally biased stretch (gly residues) spans 284–294 (ILGGDSGGPTW).

It is found in the nucleus. In terms of biological role, transcription factor that binds specifically to a 5'-AA[AG]G-3' consensus core sequence. This chain is Dof zinc finger protein DOF4.1 (DOF4.1), found in Arabidopsis thaliana (Mouse-ear cress).